The following is a 596-amino-acid chain: Nitrite reductase (596 aa).

The signal sequence occupies residues 1–29 (MRQRTPFARPGLLASAALALVLGPLAVAA). Residues 30–76 (QEQAAPPKDPAAALEDHKTKTDNRYEPSLDNLAQQDVAALGAPEGIP) form an N-terminal tail region. His46 contacts heme c. Residues Tyr54 and Ser57 each contribute to the heme d1 site. Residues 77 to 162 (ALSDAQYNEA…ANYLLLDPAA (86 aa)) form the Cytochrome c domain. Heme c contacts are provided by Cys94, Cys97, His98, Lys108, and Tyr122. Heme d1 contacts are provided by Trp138, Arg203, His229, Arg232, Arg245, Arg272, Tyr292, Arg420, Gln536, and Thr583. The tract at residues 163 to 596 (PPEFGMKEMR…NVYNTMTDTY (434 aa)) is D1-heme domain.

As to quaternary structure, homodimer. The cofactor is heme c. Requires heme as cofactor.

Its subcellular location is the periplasm. The enzyme catalyses nitric oxide + Fe(III)-[cytochrome c] + H2O = Fe(II)-[cytochrome c] + nitrite + 2 H(+). The catalysed reaction is A + NH4(+) + H2O = hydroxylamine + AH2 + H(+). Functionally, inactivation of this cytochrome oxidase results in the loss of nitrite and nitric oxide reductase activities, but not of nitrous oxide reductase activity. This chain is Nitrite reductase (nirS), found in Paracoccus denitrificans (strain Pd 1222).